The sequence spans 108 residues: Insulin-1 (108 aa).

The N-terminal stretch at methionine 1–alanine 24 is a signal peptide. 3 disulfides stabilise this stretch: cysteine 31–cysteine 94, cysteine 43–cysteine 107, and cysteine 93–cysteine 98. A propeptide spans glutamate 57–glutamine 85 (c peptide).

It belongs to the insulin family. Heterodimer of a B chain and an A chain linked by two disulfide bonds.

It is found in the secreted. Its function is as follows. Insulin decreases blood glucose concentration. It increases cell permeability to monosaccharides, amino acids and fatty acids. It accelerates glycolysis, the pentose phosphate cycle, and glycogen synthesis in liver. The sequence is that of Insulin-1 (Ins1) from Mus musculus (Mouse).